The chain runs to 198 residues: Recombination protein RecR (198 aa).

The C4-type zinc-finger motif lies at 57–72 (CSSCGHITDKDPCYIC). The 96-residue stretch at 80–175 (SIICVVQDPK…KITRIAHGLP (96 aa)) folds into the Toprim domain.

The protein belongs to the RecR family.

Its function is as follows. May play a role in DNA repair. It seems to be involved in an RecBC-independent recombinational process of DNA repair. It may act with RecF and RecO. The sequence is that of Recombination protein RecR from Anoxybacillus flavithermus (strain DSM 21510 / WK1).